We begin with the raw amino-acid sequence, 144 residues long: 3-hydroxyacyl-[acyl-carrier-protein] dehydratase FabZ (144 aa).

His-48 is a catalytic residue.

This sequence belongs to the thioester dehydratase family. FabZ subfamily.

It is found in the cytoplasm. It catalyses the reaction a (3R)-hydroxyacyl-[ACP] = a (2E)-enoyl-[ACP] + H2O. Involved in unsaturated fatty acids biosynthesis. Catalyzes the dehydration of short chain beta-hydroxyacyl-ACPs and long chain saturated and unsaturated beta-hydroxyacyl-ACPs. The polypeptide is 3-hydroxyacyl-[acyl-carrier-protein] dehydratase FabZ (Bacillus licheniformis (strain ATCC 14580 / DSM 13 / JCM 2505 / CCUG 7422 / NBRC 12200 / NCIMB 9375 / NCTC 10341 / NRRL NRS-1264 / Gibson 46)).